We begin with the raw amino-acid sequence, 429 residues long: Serum response factor-binding protein 1 (429 aa).

A2 carries the post-translational modification N-acetylalanine. 2 coiled-coil regions span residues 42–67 (KGTE…AMKE) and 108–144 (LLKK…EDNH). 2 stretches are compositionally biased toward polar residues: residues 128 to 138 (QNVTEVESSKN) and 146 to 160 (KNTL…NLQR). Disordered stretches follow at residues 128–285 (QNVT…GDDF) and 311–429 (EKVF…TFDD). The segment covering 183–195 (NSKEKIAKMEHGP) has biased composition (basic and acidic residues). K190 participates in a covalent cross-link: Glycyl lysine isopeptide (Lys-Gly) (interchain with G-Cter in SUMO2). 5 positions are modified to phosphoserine: S203, S205, S264, S279, and S281. Over residues 249 to 265 (GGEELCEEEKEYFDDST) the composition is skewed to acidic residues. Over residues 311–341 (EKVFLKEDTGETHGDTRNDKTKPSTETRKLE) the composition is skewed to basic and acidic residues. Residue K316 forms a Glycyl lysine isopeptide (Lys-Gly) (interchain with G-Cter in SUMO2) linkage. Residues S349, S351, and S367 each carry the phosphoserine modification. The span at 357–367 (NFKEQAPKTRS) shows a compositional bias: basic and acidic residues. Residues 373-383 (NEPQFKNQFNK) are compositionally biased toward polar residues.

In terms of assembly, interacts with SRF. Forms complexes with SRF and SRF cofactors ARID2, MYOCD and NKX2-5. Interacts with the N-terminus of SLC2A4.

It localises to the cytoplasm. The protein localises to the perinuclear region. May be involved in regulating transcriptional activation of cardiac genes during the aging process. May play a role in biosynthesis and/or processing of SLC2A4 in adipose cells. This Pongo abelii (Sumatran orangutan) protein is Serum response factor-binding protein 1.